The following is a 236-amino-acid chain: Peptidyl-prolyl cis-trans isomerase CYP21-4 (236 aa).

The chain crosses the membrane as a helical; Signal-anchor for type II membrane protein span at residues 22-42; it reads ISISTIIVCNLVVAVVILSLV. The segment at 52–71 is disordered; sequence SRNTIEHETRSQRFEDTNTA. Over residues 54–67 the composition is skewed to basic and acidic residues; that stretch reads NTIEHETRSQRFED. Residues 82 to 232 enclose the PPIase cyclophilin-type domain; the sequence is FADINTSKGL…SPIGITGVVL (151 aa). Residue Asn-86 is glycosylated (N-linked (GlcNAc...) asparagine).

Belongs to the cyclophilin-type PPIase family. As to expression, ubiquitous.

Its subcellular location is the membrane. It carries out the reaction [protein]-peptidylproline (omega=180) = [protein]-peptidylproline (omega=0). Functionally, PPIases accelerate the folding of proteins. It catalyzes the cis-trans isomerization of proline imidic peptide bonds in oligopeptides. This is Peptidyl-prolyl cis-trans isomerase CYP21-4 (CYP21-4) from Arabidopsis thaliana (Mouse-ear cress).